The following is a 147-amino-acid chain: MSEELQPVFSIERLYVKDLSLEVPHAPQIFLEQGDPEVDMRVSTGSQKLEDGYYDVDVTVTVTAKLDNERTMFLNEVTQSGIFRLENIPEEDVQLLLGVACPNILFPYAREAVSGTVTRAGFPPVLLAPINFEAIYQQQQEAEAAGA.

It belongs to the SecB family. In terms of assembly, homotetramer, a dimer of dimers. One homotetramer interacts with 1 SecA dimer.

The protein localises to the cytoplasm. In terms of biological role, one of the proteins required for the normal export of preproteins out of the cell cytoplasm. It is a molecular chaperone that binds to a subset of precursor proteins, maintaining them in a translocation-competent state. It also specifically binds to its receptor SecA. The protein is Protein-export protein SecB of Neisseria gonorrhoeae (strain ATCC 700825 / FA 1090).